The chain runs to 427 residues: Trigger factor (427 aa).

The PPIase FKBP-type domain maps to 163 to 248 (GNIAIIDFKG…VKGIKVKELP (86 aa)).

Belongs to the FKBP-type PPIase family. Tig subfamily.

It localises to the cytoplasm. It carries out the reaction [protein]-peptidylproline (omega=180) = [protein]-peptidylproline (omega=0). Involved in protein export. Acts as a chaperone by maintaining the newly synthesized protein in an open conformation. Functions as a peptidyl-prolyl cis-trans isomerase. The chain is Trigger factor from Clostridium botulinum (strain Alaska E43 / Type E3).